A 257-amino-acid chain; its full sequence is Dihydroorotate dehydrogenase B (NAD(+)), electron transfer subunit (257 aa).

Residues 2-100 enclose the FAD-binding FR-type domain; that stretch reads ILIEDLTVVS…MGPQGNGFDI (99 aa). FAD contacts are provided by residues 51–54, 68–70, and 75–76; these read RPIS, VYR, and GT. 4 residues coordinate [2Fe-2S] cluster: Cys-220, Cys-225, Cys-228, and Cys-244.

It belongs to the PyrK family. In terms of assembly, heterotetramer of 2 PyrK and 2 PyrD type B subunits. Requires [2Fe-2S] cluster as cofactor. It depends on FAD as a cofactor.

Its pathway is pyrimidine metabolism; UMP biosynthesis via de novo pathway; orotate from (S)-dihydroorotate (NAD(+) route): step 1/1. Responsible for channeling the electrons from the oxidation of dihydroorotate from the FMN redox center in the PyrD type B subunit to the ultimate electron acceptor NAD(+). The chain is Dihydroorotate dehydrogenase B (NAD(+)), electron transfer subunit from Streptococcus thermophilus (strain ATCC BAA-491 / LMD-9).